A 1001-amino-acid polypeptide reads, in one-letter code: Chloride channel protein clh-3 (1001 aa).

Residues Met-1–Val-48 are Cytoplasmic-facing. A run of 2 helical transmembrane segments spans residues Ile-49 to Asp-85 and His-91 to Ile-117. The Selectivity filter part_1 signature appears at Gly-123–Pro-127. Ser-124 contacts chloride. An intramembrane region (helical) is located at residues Ile-126–Leu-133. 2 consecutive transmembrane segments (helical) span residues Leu-142 to Ser-160 and Glu-167 to Val-185. The Selectivity filter part_2 signature appears at Gly-165–Pro-169. 2 consecutive intramembrane regions (helical) follow at residues Met-202–Thr-214 and Pro-218–Ile-226. 5 consecutive transmembrane segments (helical) span residues Tyr-238–Phe-258, Leu-285–Leu-313, Ile-322–Leu-341, Tyr-405–Ala-425, and Gly-433–Leu-456. The Selectivity filter part_3 signature appears at Gly-433–Pro-437. Positions 434 and 435 each coordinate chloride. The helical intramembrane region spans Gly-473–Val-487. An intramembrane region (note=Loop between two helices) is located at residues Thr-488–His-489. Residues Thr-490–Thr-501 constitute an intramembrane region (helical). Residues Gly-502–His-506 constitute an intramembrane region (note=Loop between two helices). A helical membrane pass occupies residues Leu-507–Leu-524. At Gln-525–Phe-1001 the chain is on the cytoplasmic side. Tyr-529 contributes to the chloride binding site. Residues Met-560–Thr-619 form the CBS 1 domain. Residues Glu-625 to Glu-657 adopt a coiled-coil conformation. Basic and acidic residues predominate over residues Leu-634 to Asp-650. Positions Leu-634–Gly-662 are disordered. A phosphoserine; by gck-3 mark is found at Ser-742 and Ser-747. Positions Ile-788 to Val-845 constitute a CBS 2 domain.

Belongs to the chloride channel (TC 2.A.49) family. In terms of assembly, isoform a interacts (via RFLI motif) with gck-3 (via C-terminus). Phosphorylated by gck-3; phosphorylation at both Ser-742 and Ser-747 is required to inhibit channel activity. Dephosphorylated by gsp-1/2 during cell swelling and oocyte meiotic maturation, which results in channel activation. As to expression, expressed in excretory cell, 4 anterior epithelial cells of the intestine, hermaphrodite-specific neurons and enteric muscles. Expressed also in vulva and uterus. Isoform a is expressed in oocytes (at protein level).

The protein localises to the cell membrane. Its function is as follows. Voltage-gated chloride channel. Insensitive to depolarizing conditioning voltages, requires low voltages for activation, insensitive to chloride levels and has a mild sensitivity to low pH. Channel gating properties are conferred by the cytoplasmic C-terminus. Plays a role in egg laying by modulating hermaphrodite-specific neurons (HSN) excitability and the ovulatory contractions of gap-junction-coupled gonadal sheath cells. When active, may prevent tubular formation of the excretory canals. Activated during oocyte meiotic maturation and by membrane hyperpolarization and cell swelling. Inhibited by Zn(2+) and to a lesser extent by Cd(2+). In terms of biological role, voltage-gated chloride channel. Sensitive to depolarizing conditioning voltages, requires stronger voltages for activation and activation is slower, is inhibited by low concentrations of chloride and is activated by low pH. Channel gating properties are conferred by the cytoplasmic C-terminus. In Caenorhabditis elegans, this protein is Chloride channel protein clh-3.